The primary structure comprises 81 residues: Photosystem I iron-sulfur center (81 aa).

4Fe-4S ferredoxin-type domains follow at residues 2–31 (SHAVKIYDTCIGCTQCVRACPLDVLEMVPW) and 39–68 (IAASPRTEDCVGCKRCETACPTHFLSIRVY). [4Fe-4S] cluster contacts are provided by Cys11, Cys14, Cys17, Cys21, Cys48, Cys51, Cys54, and Cys58.

The cyanobacterial PSI reaction center is composed of one copy each of PsaA,B,C,D,E,F,I,J,K,L,M and X, and forms trimeric complexes. [4Fe-4S] cluster is required as a cofactor.

Its subcellular location is the cellular thylakoid membrane. It catalyses the reaction reduced [plastocyanin] + hnu + oxidized [2Fe-2S]-[ferredoxin] = oxidized [plastocyanin] + reduced [2Fe-2S]-[ferredoxin]. In terms of biological role, apoprotein for the two 4Fe-4S centers FA and FB of photosystem I (PSI); essential for photochemical activity. FB is the terminal electron acceptor of PSI, donating electrons to ferredoxin. The C-terminus interacts with PsaA/B/D and helps assemble the protein into the PSI complex. Required for binding of PsaD and PsaE to PSI. PSI is a plastocyanin/cytochrome c6-ferredoxin oxidoreductase, converting photonic excitation into a charge separation, which transfers an electron from the donor P700 chlorophyll pair to the spectroscopically characterized acceptors A0, A1, FX, FA and FB in turn. The chain is Photosystem I iron-sulfur center from Prochlorococcus marinus (strain MIT 9313).